Consider the following 305-residue polypeptide: Homoserine O-acetyltransferase (305 aa).

The active-site Acyl-thioester intermediate is cysteine 142. Substrate is bound by residues lysine 163 and serine 192. The active-site Proton acceptor is histidine 235. Glutamate 237 is a catalytic residue. Arginine 249 contributes to the substrate binding site.

This sequence belongs to the MetA family.

Its subcellular location is the cytoplasm. The enzyme catalyses L-homoserine + acetyl-CoA = O-acetyl-L-homoserine + CoA. It functions in the pathway amino-acid biosynthesis; L-methionine biosynthesis via de novo pathway; O-acetyl-L-homoserine from L-homoserine: step 1/1. Its function is as follows. Transfers an acetyl group from acetyl-CoA to L-homoserine, forming acetyl-L-homoserine. The sequence is that of Homoserine O-acetyltransferase from Cereibacter sphaeroides (strain ATCC 17025 / ATH 2.4.3) (Rhodobacter sphaeroides).